The sequence spans 342 residues: Ribosomal RNA small subunit methyltransferase C (342 aa).

Belongs to the methyltransferase superfamily. RsmC family. In terms of assembly, monomer.

The protein resides in the cytoplasm. It carries out the reaction guanosine(1207) in 16S rRNA + S-adenosyl-L-methionine = N(2)-methylguanosine(1207) in 16S rRNA + S-adenosyl-L-homocysteine + H(+). Its function is as follows. Specifically methylates the guanine in position 1207 of 16S rRNA in the 30S particle. The polypeptide is Ribosomal RNA small subunit methyltransferase C (Shewanella sp. (strain MR-7)).